Here is a 196-residue protein sequence, read N- to C-terminus: Adenylate kinase (196 aa).

Gly-9–Thr-17 is an ATP binding site.

This sequence belongs to the archaeal adenylate kinase family.

The protein localises to the cytoplasm. The enzyme catalyses AMP + ATP = 2 ADP. The polypeptide is Adenylate kinase (Thermococcus onnurineus (strain NA1)).